Reading from the N-terminus, the 1051-residue chain is Probable valine--tRNA ligase, mitochondrial (1051 aa).

The N-terminal 20 residues, 1–20, are a transit peptide targeting the mitochondrion; sequence MNKLLFLSKKSSTSNLYRFY. Residues 71-81 carry the 'HIGH' region motif; it reads PNVTGSLHIGH. A 'KMSKS' region motif is present at residues 606-610; the sequence is KMSKS. K609 is a binding site for ATP. The stretch at 972-1019 forms a coiled coil; the sequence is KELQISIEFDKEINNQLNQKLINPNQSNDKKILKLENFIKQLQDEIDN.

Belongs to the class-I aminoacyl-tRNA synthetase family.

Its subcellular location is the mitochondrion. The catalysed reaction is tRNA(Val) + L-valine + ATP = L-valyl-tRNA(Val) + AMP + diphosphate. This chain is Probable valine--tRNA ligase, mitochondrial (valS2), found in Dictyostelium discoideum (Social amoeba).